The primary structure comprises 366 residues: 3-dehydroquinate synthase (366 aa).

NAD(+) contacts are provided by residues aspartate 75–lysine 80, glycine 109–aspartate 113, threonine 133–threonine 134, lysine 146, lysine 155, and cysteine 173–threonine 176. Glutamate 188, histidine 251, and histidine 268 together coordinate Zn(2+).

Belongs to the sugar phosphate cyclases superfamily. Dehydroquinate synthase family. NAD(+) serves as cofactor. Co(2+) is required as a cofactor. Requires Zn(2+) as cofactor.

Its subcellular location is the cytoplasm. The catalysed reaction is 7-phospho-2-dehydro-3-deoxy-D-arabino-heptonate = 3-dehydroquinate + phosphate. Its pathway is metabolic intermediate biosynthesis; chorismate biosynthesis; chorismate from D-erythrose 4-phosphate and phosphoenolpyruvate: step 2/7. Functionally, catalyzes the conversion of 3-deoxy-D-arabino-heptulosonate 7-phosphate (DAHP) to dehydroquinate (DHQ). The chain is 3-dehydroquinate synthase from Vibrio parahaemolyticus serotype O3:K6 (strain RIMD 2210633).